Here is a 159-residue protein sequence, read N- to C-terminus: Cyclic pyranopterin monophosphate synthase (159 aa).

Substrate contacts are provided by residues 75 to 77 (LCH) and 113 to 114 (ME). The active site involves Asp-128.

This sequence belongs to the MoaC family. Homohexamer; trimer of dimers.

It carries out the reaction (8S)-3',8-cyclo-7,8-dihydroguanosine 5'-triphosphate = cyclic pyranopterin phosphate + diphosphate. The protein operates within cofactor biosynthesis; molybdopterin biosynthesis. Its function is as follows. Catalyzes the conversion of (8S)-3',8-cyclo-7,8-dihydroguanosine 5'-triphosphate to cyclic pyranopterin monophosphate (cPMP). The sequence is that of Cyclic pyranopterin monophosphate synthase from Aliivibrio fischeri (strain MJ11) (Vibrio fischeri).